The chain runs to 612 residues: Dihydroxy-acid dehydratase (612 aa).

Residue aspartate 81 coordinates Mg(2+). A [2Fe-2S] cluster-binding site is contributed by cysteine 122. Positions 123 and 124 each coordinate Mg(2+). Lysine 124 bears the N6-carboxylysine mark. Position 195 (cysteine 195) interacts with [2Fe-2S] cluster. Glutamate 491 provides a ligand contact to Mg(2+). Serine 517 serves as the catalytic Proton acceptor.

This sequence belongs to the IlvD/Edd family. Homodimer. The cofactor is [2Fe-2S] cluster. Mg(2+) is required as a cofactor.

It catalyses the reaction (2R)-2,3-dihydroxy-3-methylbutanoate = 3-methyl-2-oxobutanoate + H2O. The catalysed reaction is (2R,3R)-2,3-dihydroxy-3-methylpentanoate = (S)-3-methyl-2-oxopentanoate + H2O. It participates in amino-acid biosynthesis; L-isoleucine biosynthesis; L-isoleucine from 2-oxobutanoate: step 3/4. It functions in the pathway amino-acid biosynthesis; L-valine biosynthesis; L-valine from pyruvate: step 3/4. Functionally, functions in the biosynthesis of branched-chain amino acids. Catalyzes the dehydration of (2R,3R)-2,3-dihydroxy-3-methylpentanoate (2,3-dihydroxy-3-methylvalerate) into 2-oxo-3-methylpentanoate (2-oxo-3-methylvalerate) and of (2R)-2,3-dihydroxy-3-methylbutanoate (2,3-dihydroxyisovalerate) into 2-oxo-3-methylbutanoate (2-oxoisovalerate), the penultimate precursor to L-isoleucine and L-valine, respectively. This is Dihydroxy-acid dehydratase from Buchnera aphidicola subsp. Baizongia pistaciae (strain Bp).